We begin with the raw amino-acid sequence, 535 residues long: Cytochrome P450 monooxygenase claQ (535 aa).

Helical transmembrane passes span 7–27 and 225–245; these read IGTWDVLFFLVFLWLLSKLVG and YFAIVVFLLAQIFPILLNLPT. Heme is bound at residue C472.

The protein belongs to the cytochrome P450 family. Requires heme as cofactor.

It is found in the membrane. The protein operates within secondary metabolite biosynthesis; terpenoid biosynthesis. Its function is as follows. Cytochrome P450 monooxygenase; part of the gene cluster that mediates the biosynthesis of clavilactone A, a meroterpenoid that features a unique benzo-fused ten-membered carbocyclic ring unit with an alpha,beta-epoxy-gamma-lactone moiety, forming an intriguing 10/5/3 tricyclic nested skeleton. Cytochrome P450 monooxygenases claO, claP, claQ, claU, and claW are close orthologs, suggesting that a redundant function or pseudogenes are present in the cla cluster. These monoxygenases are not involved in clavilactone A biosynthesis nor its modification. ClaR, ClaS and ClaT are sufficient to produce clavilactone A. The biosynthesis begins with the prenyltransferase claS that transfers geranyl pyrophosphate (GPP) to hydroquinone to produces geranylhydroquinone. The cytochrome P450 monooxygenase claR then catalyzes the diradical coupling reaction between the intramolecular hydroquinone and allyl moieties to form the benzo-fused ten-membered carbocyclic ring unit of wigantol. Finally the cytochrome P450 monooxygenase claT exquisitely and stereoselectively assembles the alpha,beta-epoxy-gamma-lactone moiety, producing clavilactone A via arnebinol A. The polypeptide is Cytochrome P450 monooxygenase claQ (Ampulloclitocybe clavipes (Club foot)).